We begin with the raw amino-acid sequence, 1104 residues long: Mitogen-activated protein kinase kinase kinase 9 (1104 aa).

A compositionally biased stretch (low complexity) spans 12–22; sequence ASAAAAAPPGE. The tract at residues 12–47 is disordered; it reads ASAAAAAPPGEDGAGAGAEEEEEEEEEAAAAVGPGE. Positions 29–39 are enriched in acidic residues; that stretch reads AEEEEEEEEEA. Positions 52–116 constitute an SH3 domain; sequence APLPYWTAVF…PSNYVTPRSA (65 aa). Residues 144–412 form the Protein kinase domain; it reads LTLEEIIGIG…LTTIEESGFF (269 aa). ATP contacts are provided by residues 150 to 158 and K171; that span reads IGIGGFGKV. D268 functions as the Proton acceptor in the catalytic mechanism. A phosphothreonine; by autocatalysis mark is found at T304 and T305. At S308 the chain carries Phosphoserine; by autocatalysis. Phosphothreonine; by autocatalysis is present on T312. 2 leucine-zipper regions span residues 430 to 451 and 465 to 486; these read IQEM…EEEL and LRRR…ELNI. 4 disordered regions span residues 532–636, 675–742, 781–819, and 890–1038; these read ASPT…PHFH, MEDE…LKRG, EEPE…FKKE, and RDPN…CFAS. Phosphoserine is present on S533. 2 stretches are compositionally biased toward polar residues: residues 566–575 and 723–739; these read PGESSKTWGR and PVNS…TNSL. The segment covering 785 to 797 has biased composition (basic and acidic residues); that stretch reads PPAREEKKRREGL. Over residues 893 to 910 the composition is skewed to polar residues; it reads NQSLTPTHVTLTTPSQPS. Residues 929–944 are compositionally biased toward low complexity; sequence SRSPSSNGLSPSPGAG. Polar residues predominate over residues 1014–1038; the sequence is HARSTSPANSSSTETPSNLDSCFAS.

It belongs to the protein kinase superfamily. STE Ser/Thr protein kinase family. MAP kinase kinase kinase subfamily. In terms of assembly, homodimer. Requires Mg(2+) as cofactor. In terms of processing, autophosphorylation on serine and threonine residues within the activation loop plays a role in enzyme activation. Thr-312 is likely to be the main autophosphorylation site. Autophosphorylation also occurs on Thr-304 and Ser-308. In terms of tissue distribution, expressed in epithelial tumor cell lines of colonic, breast and esophageal origin.

It carries out the reaction L-seryl-[protein] + ATP = O-phospho-L-seryl-[protein] + ADP + H(+). The catalysed reaction is L-threonyl-[protein] + ATP = O-phospho-L-threonyl-[protein] + ADP + H(+). Homodimerization via the leucine zipper domains is required for autophosphorylation of multiple sites in the activation loop and subsequent activation. Autophosphorylation at Thr-312 is the key step in activation of MAP3K9/MLK1 and is required for full phosphorylation. Autophosphorylation at Thr-304 and Ser-308 have been shown to be of secondary importance in the activation of MAP3K9/MLK1. CEP-1347 and many indolocarbazole analogs have been shown to act as inhibitors of MAP3K9/MLK1 activity. Serine/threonine kinase which acts as an essential component of the MAP kinase signal transduction pathway. Plays an important role in the cascades of cellular responses evoked by changes in the environment. Once activated, acts as an upstream activator of the MKK/JNK signal transduction cascade through the phosphorylation of MAP2K4/MKK4 and MAP2K7/MKK7 which in turn activate the JNKs. The MKK/JNK signaling pathway regulates stress response via activator protein-1 (JUN) and GATA4 transcription factors. Also plays a role in mitochondrial death signaling pathway, including the release cytochrome c, leading to apoptosis. This Homo sapiens (Human) protein is Mitogen-activated protein kinase kinase kinase 9 (MAP3K9).